We begin with the raw amino-acid sequence, 541 residues long: Long-chain-fatty-acid--CoA ligase (541 aa).

Threonine 184 lines the Mg(2+) pocket. Residues valine 231 and tryptophan 234 each contribute to the ATP site. The tetradecanoyl-AMP site is built by glycine 302, glutamine 322, glycine 323, and threonine 327. ATP contacts are provided by glycine 323 and threonine 327. Residue glutamate 328 coordinates Mg(2+). Residues aspartate 418, lysine 435, lysine 439, and tryptophan 444 each coordinate ATP. Aspartate 418, lysine 435, and lysine 439 together coordinate tetradecanoyl-AMP.

The protein belongs to the ATP-dependent AMP-binding enzyme family. Forms a domain swapped homodimer. Mg(2+) is required as a cofactor.

It catalyses the reaction a long-chain fatty acid + ATP + CoA = a long-chain fatty acyl-CoA + AMP + diphosphate. The catalysed reaction is tetradecanoate + ATP + CoA = tetradecanoyl-CoA + AMP + diphosphate. It carries out the reaction hexadecanoate + ATP + CoA = hexadecanoyl-CoA + AMP + diphosphate. Its pathway is lipid metabolism; fatty acid metabolism. Functionally, catalyzes the esterification of a number of long chain fatty acids with CoA, resulting in the formation of long-chain fatty acyl-CoA. Myristate (C14) is the most efficiently processed fatty acid, followed by palmitate (C16). Also catalyzes the esterification of stearate (C18) and laurate (C12), but at lower efficiency. Does not catalyze the esterification of the unsaturated fatty acids mysteroleic and palmitoleic acids in vitro. The sequence is that of Long-chain-fatty-acid--CoA ligase from Thermus thermophilus (strain ATCC 27634 / DSM 579 / HB8).